We begin with the raw amino-acid sequence, 139 residues long: Nucleoside diphosphate kinase (139 aa).

Residues K10, F58, R86, T92, R104, and N114 each coordinate ATP. H117 functions as the Pros-phosphohistidine intermediate in the catalytic mechanism.

It belongs to the NDK family. In terms of assembly, homotetramer. It depends on Mg(2+) as a cofactor.

It is found in the cytoplasm. The enzyme catalyses a 2'-deoxyribonucleoside 5'-diphosphate + ATP = a 2'-deoxyribonucleoside 5'-triphosphate + ADP. It catalyses the reaction a ribonucleoside 5'-diphosphate + ATP = a ribonucleoside 5'-triphosphate + ADP. Major role in the synthesis of nucleoside triphosphates other than ATP. The ATP gamma phosphate is transferred to the NDP beta phosphate via a ping-pong mechanism, using a phosphorylated active-site intermediate. This is Nucleoside diphosphate kinase from Rhodococcus jostii (strain RHA1).